The following is a 118-amino-acid chain: Large ribosomal subunit protein bL19 (118 aa).

Belongs to the bacterial ribosomal protein bL19 family.

This protein is located at the 30S-50S ribosomal subunit interface and may play a role in the structure and function of the aminoacyl-tRNA binding site. The polypeptide is Large ribosomal subunit protein bL19 (Wolinella succinogenes (strain ATCC 29543 / DSM 1740 / CCUG 13145 / JCM 31913 / LMG 7466 / NCTC 11488 / FDC 602W) (Vibrio succinogenes)).